A 700-amino-acid chain; its full sequence is Polyribonucleotide nucleotidyltransferase (700 aa).

2 residues coordinate Mg(2+): D485 and D491. In terms of domain architecture, KH spans P552–I611. The S1 motif domain maps to G621 to K689.

Belongs to the polyribonucleotide nucleotidyltransferase family. Component of the RNA degradosome, which is a multiprotein complex involved in RNA processing and mRNA degradation. Mg(2+) is required as a cofactor.

Its subcellular location is the cytoplasm. The enzyme catalyses RNA(n+1) + phosphate = RNA(n) + a ribonucleoside 5'-diphosphate. Involved in mRNA degradation. Catalyzes the phosphorolysis of single-stranded polyribonucleotides processively in the 3'- to 5'-direction. The polypeptide is Polyribonucleotide nucleotidyltransferase (Shewanella baltica (strain OS155 / ATCC BAA-1091)).